The primary structure comprises 187 residues: Elongation factor P (187 aa).

This sequence belongs to the elongation factor P family.

It localises to the cytoplasm. It functions in the pathway protein biosynthesis; polypeptide chain elongation. Its function is as follows. Involved in peptide bond synthesis. Stimulates efficient translation and peptide-bond synthesis on native or reconstituted 70S ribosomes in vitro. Probably functions indirectly by altering the affinity of the ribosome for aminoacyl-tRNA, thus increasing their reactivity as acceptors for peptidyl transferase. In Syntrophus aciditrophicus (strain SB), this protein is Elongation factor P.